A 346-amino-acid chain; its full sequence is DNA-directed RNA polymerase subunit alpha (346 aa).

An alpha N-terminal domain (alpha-NTD) region spans residues Met-1–Glu-233. Residues Ile-268 to Glu-346 are alpha C-terminal domain (alpha-CTD).

The protein belongs to the RNA polymerase alpha chain family. In terms of assembly, in plastids the minimal PEP RNA polymerase catalytic core is composed of four subunits: alpha, beta, beta', and beta''. When a (nuclear-encoded) sigma factor is associated with the core the holoenzyme is formed, which can initiate transcription.

It is found in the plastid. The protein localises to the chloroplast. The enzyme catalyses RNA(n) + a ribonucleoside 5'-triphosphate = RNA(n+1) + diphosphate. DNA-dependent RNA polymerase catalyzes the transcription of DNA into RNA using the four ribonucleoside triphosphates as substrates. This chain is DNA-directed RNA polymerase subunit alpha, found in Ranunculus macranthus (Large buttercup).